The following is a 431-amino-acid chain: Glutamate-1-semialdehyde 2,1-aminomutase (431 aa).

At lysine 269 the chain carries N6-(pyridoxal phosphate)lysine.

The protein belongs to the class-III pyridoxal-phosphate-dependent aminotransferase family. HemL subfamily. In terms of assembly, homodimer. Pyridoxal 5'-phosphate is required as a cofactor.

The protein resides in the cytoplasm. The enzyme catalyses (S)-4-amino-5-oxopentanoate = 5-aminolevulinate. It functions in the pathway porphyrin-containing compound metabolism; protoporphyrin-IX biosynthesis; 5-aminolevulinate from L-glutamyl-tRNA(Glu): step 2/2. It participates in porphyrin-containing compound metabolism; chlorophyll biosynthesis. This Chlorobium phaeobacteroides (strain DSM 266 / SMG 266 / 2430) protein is Glutamate-1-semialdehyde 2,1-aminomutase.